The sequence spans 335 residues: Fructose-1,6-bisphosphatase class 1 (335 aa).

Residues Glu-94, Asp-113, Leu-115, and Asp-116 each contribute to the Mg(2+) site. Substrate-binding positions include 116 to 119, Asn-208, and Lys-274; that span reads DGSS. Residue Glu-280 participates in Mg(2+) binding.

It belongs to the FBPase class 1 family. As to quaternary structure, homotetramer. The cofactor is Mg(2+).

The protein resides in the cytoplasm. It carries out the reaction beta-D-fructose 1,6-bisphosphate + H2O = beta-D-fructose 6-phosphate + phosphate. It participates in carbohydrate biosynthesis; gluconeogenesis. This is Fructose-1,6-bisphosphatase class 1 from Polynucleobacter asymbioticus (strain DSM 18221 / CIP 109841 / QLW-P1DMWA-1) (Polynucleobacter necessarius subsp. asymbioticus).